We begin with the raw amino-acid sequence, 314 residues long: Glutamyl-Q tRNA(Asp) synthetase (314 aa).

L-glutamate contacts are provided by residues 14 to 18 and Glu50; that span reads RFAPS. The 'HIGH' region motif lies at 17–27; sequence PSPTGPLHVGS. Zn(2+) contacts are provided by Cys106, Cys108, Tyr129, and Cys133. L-glutamate is bound by residues Tyr187 and Arg205. A 'KMSKS' region motif is present at residues 243–247; that stretch reads KLSKR. Residue Lys246 participates in ATP binding.

It belongs to the class-I aminoacyl-tRNA synthetase family. GluQ subfamily. It depends on Zn(2+) as a cofactor.

Catalyzes the tRNA-independent activation of glutamate in presence of ATP and the subsequent transfer of glutamate onto a tRNA(Asp). Glutamate is transferred on the 2-amino-5-(4,5-dihydroxy-2-cyclopenten-1-yl) moiety of the queuosine in the wobble position of the QUC anticodon. The sequence is that of Glutamyl-Q tRNA(Asp) synthetase from Geobacter sulfurreducens (strain ATCC 51573 / DSM 12127 / PCA).